A 721-amino-acid polypeptide reads, in one-letter code: ATP-dependent zinc metalloprotease FtsH (721 aa).

Residues 1–44 (MYFLKKIVNLFSSKIESEDNNVKKDDLTQPRKQSPEARKRRNRR) lie on the Cytoplasmic side of the membrane. The helical transmembrane segment at 45 to 65 (IIFWLIILLIIGTIIGVIIYF) threads the bilayer. Over 66-190 (SVRKEYDNVI…AGIPSSGFNP (125 aa)) the chain is Extracellular. A helical membrane pass occupies residues 191 to 211 (QVIISPLISIIFFIIFLYIIL). Over 212–721 (RVSKAQSDSL…KDKEKDQKSN (510 aa)) the chain is Cytoplasmic. An ATP-binding site is contributed by 279 to 286 (GPPGTGKT). His-498 contacts Zn(2+). Glu-499 is an active-site residue. His-502 and Asp-577 together coordinate Zn(2+). The tract at residues 686 to 721 (NKREASQKQANSSVEEAKVVDDEESIKDKEKDQKSN) is disordered. A compositionally biased stretch (basic and acidic residues) spans 700–721 (EEAKVVDDEESIKDKEKDQKSN).

This sequence in the central section; belongs to the AAA ATPase family. It in the C-terminal section; belongs to the peptidase M41 family. In terms of assembly, homohexamer. Zn(2+) serves as cofactor.

The protein localises to the cell membrane. Functionally, acts as a processive, ATP-dependent zinc metallopeptidase for both cytoplasmic and membrane proteins. Plays a role in the quality control of integral membrane proteins. In Ureaplasma parvum serovar 3 (strain ATCC 27815 / 27 / NCTC 11736), this protein is ATP-dependent zinc metalloprotease FtsH.